The sequence spans 392 residues: Succinate--CoA ligase [ADP-forming] subunit beta (392 aa).

Residues 9–248 (KGLFRDYGVS…LHEEDPTEVK (240 aa)) form the ATP-grasp domain. Residues K50, 57–59 (GRG), V106, and E111 each bind ATP. Residues N203 and D217 each coordinate Mg(2+). Residues N268 and 325-327 (GIV) each bind substrate.

The protein belongs to the succinate/malate CoA ligase beta subunit family. As to quaternary structure, heterotetramer of two alpha and two beta subunits. Requires Mg(2+) as cofactor.

It catalyses the reaction succinate + ATP + CoA = succinyl-CoA + ADP + phosphate. The catalysed reaction is GTP + succinate + CoA = succinyl-CoA + GDP + phosphate. Its pathway is carbohydrate metabolism; tricarboxylic acid cycle; succinate from succinyl-CoA (ligase route): step 1/1. Succinyl-CoA synthetase functions in the citric acid cycle (TCA), coupling the hydrolysis of succinyl-CoA to the synthesis of either ATP or GTP and thus represents the only step of substrate-level phosphorylation in the TCA. The beta subunit provides nucleotide specificity of the enzyme and binds the substrate succinate, while the binding sites for coenzyme A and phosphate are found in the alpha subunit. This chain is Succinate--CoA ligase [ADP-forming] subunit beta, found in Salinibacter ruber (strain DSM 13855 / M31).